Consider the following 182-residue polypeptide: Flagellar transcriptional regulator FlhC (182 aa).

Residues cysteine 138, cysteine 141, cysteine 158, and cysteine 161 each contribute to the Zn(2+) site.

The protein belongs to the FlhC family. Heterohexamer composed of two FlhC and four FlhD subunits. Each FlhC binds a FlhD dimer, forming a heterotrimer, and a hexamer assembles by dimerization of two heterotrimers. Zn(2+) serves as cofactor.

Its subcellular location is the cytoplasm. In terms of biological role, functions in complex with FlhD as a master transcriptional regulator that regulates transcription of several flagellar and non-flagellar operons by binding to their promoter region. Activates expression of class 2 flagellar genes, including fliA, which is a flagellum-specific sigma factor that turns on the class 3 genes. Also regulates genes whose products function in a variety of physiological pathways. The protein is Flagellar transcriptional regulator FlhC of Gallionella capsiferriformans (strain ES-2) (Gallionella ferruginea capsiferriformans (strain ES-2)).